Here is a 307-residue protein sequence, read N- to C-terminus: GTPase Era (307 aa).

Residues arginine 7 to lysine 181 enclose the Era-type G domain. Residues glycine 15–serine 22 form a G1 region. Residue glycine 15 to serine 22 participates in GTP binding. Residues glutamine 41 to asparagine 45 are G2. The interval aspartate 62–glycine 65 is G3. GTP contacts are provided by residues aspartate 62 to leucine 66 and asparagine 130 to aspartate 133. Positions asparagine 130–aspartate 133 are G4. The segment at isoleucine 160 to alanine 162 is G5. The 79-residue stretch at leucine 212–glutamate 290 folds into the KH type-2 domain.

Belongs to the TRAFAC class TrmE-Era-EngA-EngB-Septin-like GTPase superfamily. Era GTPase family. Monomer.

Its subcellular location is the cytoplasm. The protein localises to the cell inner membrane. Functionally, an essential GTPase that binds both GDP and GTP, with rapid nucleotide exchange. Plays a role in 16S rRNA processing and 30S ribosomal subunit biogenesis and possibly also in cell cycle regulation and energy metabolism. The chain is GTPase Era from Desulfovibrio desulfuricans (strain ATCC 27774 / DSM 6949 / MB).